Consider the following 1101-residue polypeptide: Protein unc-13 homolog (1101 aa).

The MHD1 domain occupies 663–804 (VSVFPAADSL…ASKDDLVPPV (142 aa)). The 111-residue stretch at 941-1051 (QSRLEGLIEA…YETRELIDDL (111 aa)) folds into the MHD2 domain.

Belongs to the unc-13 family. As to expression, expressed in roots, cotyledons, leaves, stems and flowers. Expressed in guard cells and mesophyll cells of leaves.

The protein localises to the cytoplasm. It is found in the cell membrane. Controls the tethering of the proton ATPase AHA1 to the plasma membrane. Is essential for stomatal opening in response to low concentration of carbon dioxide and light. The protein is Protein unc-13 homolog of Arabidopsis thaliana (Mouse-ear cress).